Consider the following 176-residue polypeptide: MKFLFDLFPIILFFAAFKVWGIFTATAVAIVATLAQVAWVAFRHRKVDTMLWVSLGVIVVFGGATLVLHDEKFIQWKPTVLYWLFAIGLLAARYAFGNNLIEKMMGKQLTLPHPVWDKLNVAWALFFAVLGVANLYVVHNFTESQWVNFKLFGTTGAMVVFIILQSLWLTKYLKDE.

A run of 6 helical transmembrane segments spans residues 3-23 (FLFD…WGIF), 24-44 (TATA…AFRH), 49-69 (TMLW…LVLH), 81-101 (LYWL…NNLI), 121-141 (VAWA…VHNF), and 149-169 (FKLF…SLWL).

This sequence belongs to the YciB family.

Its subcellular location is the cell inner membrane. In terms of biological role, plays a role in cell envelope biogenesis, maintenance of cell envelope integrity and membrane homeostasis. This Burkholderia lata (strain ATCC 17760 / DSM 23089 / LMG 22485 / NCIMB 9086 / R18194 / 383) protein is Inner membrane-spanning protein YciB.